Reading from the N-terminus, the 307-residue chain is Ribosomal protein L11 methyltransferase (307 aa).

S-adenosyl-L-methionine contacts are provided by Thr162, Gly183, Asp205, and Asn244.

The protein belongs to the methyltransferase superfamily. PrmA family.

The protein localises to the cytoplasm. It catalyses the reaction L-lysyl-[protein] + 3 S-adenosyl-L-methionine = N(6),N(6),N(6)-trimethyl-L-lysyl-[protein] + 3 S-adenosyl-L-homocysteine + 3 H(+). Its function is as follows. Methylates ribosomal protein L11. This is Ribosomal protein L11 methyltransferase from Bordetella bronchiseptica (strain ATCC BAA-588 / NCTC 13252 / RB50) (Alcaligenes bronchisepticus).